Consider the following 585-residue polypeptide: MSHDNKPTDSTPAASNFLRSIIDQDLAASTYAGRQDKAGEPLPTVITRFPPEPNGYLHIGHAKSICLNFGLARDYGGRCHLRFDDTNPVKEDTEYVDSIIDAVHWLGFSWDSEGKDGTRQPHLYYASDYFDQLYAFAETLIERGAAYIDSQTAEQIAASRGNFSEPGKPSPYRERSVEENLQLFRDMRAGKYADGEHVLRAKIDMTAPNIVMRDPVLYRIRHAHHHRTGDKWCIYPMYDFTHCISDALENITHSLCTLEFENNRPLYDWVLEHLRDSGVFRDPLPHQYEFARLNLTYAITSKRKLKQLVDEQRVDGWDDPRMPTLVGVRRRGYTPESIQLFCDRVGVAKADSWIDMSTLEGAVRDDLDGRAARGVAVLDPLKLIIDNYPEGQSEECSAPVHPKKPELGKRVFPLSRELWIEREDFNETPPKGYFRLFPGNKVRLKYGYVIECTGVDKDADGNVIAVHASYLPETKSGTPGADSVKVKGVIHWVSAAHAYEAEVRLYDRLFNDPNPDAGGKNFLDALNPDSKQVITAYLEPGLREAQPEDRFQFERHGYFVADRTDSQPGKPVFNRIVGLKDSWGK.

The 'HIGH' region motif lies at 51-61 (PEPNGYLHIGH). ATP-binding positions include 52–54 (EPN) and 58–64 (HIGHAKS). Positions 84 and 238 each coordinate L-glutamine. ATP contacts are provided by residues Thr257 and 292 to 293 (RL). The short motif at 299–303 (ITSKR) is the 'KMSKS' region element.

It belongs to the class-I aminoacyl-tRNA synthetase family. In terms of assembly, monomer.

It is found in the cytoplasm. The enzyme catalyses tRNA(Gln) + L-glutamine + ATP = L-glutaminyl-tRNA(Gln) + AMP + diphosphate. In Cupriavidus necator (strain ATCC 17699 / DSM 428 / KCTC 22496 / NCIMB 10442 / H16 / Stanier 337) (Ralstonia eutropha), this protein is Glutamine--tRNA ligase.